The sequence spans 115 residues: Promotilin (115 aa).

The signal sequence occupies residues 1-25; the sequence is MVSRKAVAALLVVHAPAMLASQTEA. The disordered stretch occupies residues 40–74; sequence EKERSKGQKKSLSVWQRSGEEGPVDPAEPIEEEGN.

Belongs to the motilin family.

Its subcellular location is the secreted. Functionally, plays an important role in the regulation of interdigestive gastrointestinal motility and indirectly causes rhythmic contraction of duodenal and colonic smooth muscle. In Macaca mulatta (Rhesus macaque), this protein is Promotilin (MLN).